Here is a 272-residue protein sequence, read N- to C-terminus: HMP-PP phosphatase (272 aa).

The Nucleophile role is filled by Asp-8. The Mg(2+) site is built by Asp-8, Asp-10, and Asp-212.

Belongs to the HAD-like hydrolase superfamily. Cof family. The cofactor is Mg(2+).

The catalysed reaction is 4-amino-2-methyl-5-(diphosphooxymethyl)pyrimidine + H2O = 4-amino-2-methyl-5-(phosphooxymethyl)pyrimidine + phosphate + H(+). Catalyzes the hydrolysis of 4-amino-2-methyl-5-hydroxymethylpyrimidine pyrophosphate (HMP-PP) to 4-amino-2-methyl-5-hydroxymethylpyrimidine phosphate (HMP-P). The sequence is that of HMP-PP phosphatase from Salmonella choleraesuis (strain SC-B67).